A 426-amino-acid chain; its full sequence is 3-phosphoshikimate 1-carboxyvinyltransferase (426 aa).

Residues lysine 22, serine 23, and arginine 27 each contribute to the 3-phosphoshikimate site. A phosphoenolpyruvate-binding site is contributed by lysine 22. Residues glycine 96 and arginine 124 each contribute to the phosphoenolpyruvate site. Positions 170, 171, 172, 198, 314, 337, and 341 each coordinate 3-phosphoshikimate. Glutamine 172 serves as a coordination point for phosphoenolpyruvate. Aspartate 314 serves as the catalytic Proton acceptor. Residues arginine 345, arginine 387, and lysine 412 each coordinate phosphoenolpyruvate.

Belongs to the EPSP synthase family. In terms of assembly, monomer.

It is found in the cytoplasm. The catalysed reaction is 3-phosphoshikimate + phosphoenolpyruvate = 5-O-(1-carboxyvinyl)-3-phosphoshikimate + phosphate. It participates in metabolic intermediate biosynthesis; chorismate biosynthesis; chorismate from D-erythrose 4-phosphate and phosphoenolpyruvate: step 6/7. Its function is as follows. Catalyzes the transfer of the enolpyruvyl moiety of phosphoenolpyruvate (PEP) to the 5-hydroxyl of shikimate-3-phosphate (S3P) to produce enolpyruvyl shikimate-3-phosphate and inorganic phosphate. The sequence is that of 3-phosphoshikimate 1-carboxyvinyltransferase from Aliivibrio fischeri (strain ATCC 700601 / ES114) (Vibrio fischeri).